The chain runs to 145 residues: MDVQIFPHRLLGADTTEKLLNRLEDIHGVKRMVIHGQRLPPEDHPDRRIINVKGQEFELQVKTGRVLLEVEDEETITDIKRVCEDLLPFGYDVTPGKYIRTEKTVTDEIKYGESLDEIPDELIGLTDQNARLSERATIIKRKKEH.

As to quaternary structure, MCR is composed of three subunits: alpha, beta, and gamma. The function of proteins C and D is not known.

The sequence is that of Methyl-coenzyme M reductase I operon protein D (mcrD) from Methanothermobacter marburgensis (strain ATCC BAA-927 / DSM 2133 / JCM 14651 / NBRC 100331 / OCM 82 / Marburg) (Methanobacterium thermoautotrophicum).